A 1401-amino-acid polypeptide reads, in one-letter code: Uveal autoantigen with coiled-coil domains and ankyrin repeats protein (1401 aa).

6 ANK repeats span residues 25–53, 54–83, 87–116, 120–149, 153–182, and 186–215; these read LMRA…KLDV, EGRS…DITT, AGRN…PTEH, QGRT…SVNA, DGRT…DINS, and QNRT…DVTL. S265 carries the phosphoserine modification. Coiled-coil stretches lie at residues 273-361, 423-827, and 856-1368; these read TKSN…SRFK, ENEI…EKIY, and ALSS…VIAI. Residue K1020 forms a Glycyl lysine isopeptide (Lys-Gly) (interchain with G-Cter in SUMO2) linkage.

Component of the apoptosome complex, composed of APAF1, pro-caspase-9 and UACA. In the complex, it probably interacts directly with APAF1. Interacts with LGALS3. Interacts with ARF6 and ACTB. Interacts with RAB39A. As to expression, highly expressed in muscle and heart, moderately in liver, kidney and pancreas, and weakly in placenta and lung.

The protein resides in the nucleus. The protein localises to the cytoplasm. It localises to the cytoskeleton. In terms of biological role, regulates APAF1 expression and plays an important role in the regulation of stress-induced apoptosis. Promotes apoptosis by regulating three pathways, apoptosome up-regulation, LGALS3/galectin-3 down-regulation and NF-kappa-B inactivation. Regulates the redistribution of APAF1 into the nucleus after proapoptotic stress. Down-regulates the expression of LGALS3 by inhibiting NFKB1. Modulates isoactin dynamics to regulate the morphological alterations required for cell growth and motility. Interaction with ARF6 may modulate cell shape and motility after injury. May be involved in multiple neurite formation. The protein is Uveal autoantigen with coiled-coil domains and ankyrin repeats protein (UACA) of Bos taurus (Bovine).